A 221-amino-acid chain; its full sequence is Guanylate kinase (221 aa).

Residues 20–198 enclose the Guanylate kinase-like domain; sequence GSLFMVVAPS…ALAELRTVVQ (179 aa). 27-34 contacts ATP; the sequence is APSGAGKS.

Belongs to the guanylate kinase family.

Its subcellular location is the cytoplasm. The enzyme catalyses GMP + ATP = GDP + ADP. Functionally, essential for recycling GMP and indirectly, cGMP. The chain is Guanylate kinase from Ralstonia nicotianae (strain ATCC BAA-1114 / GMI1000) (Ralstonia solanacearum).